A 443-amino-acid polypeptide reads, in one-letter code: Xaa-Pro dipeptidase (443 aa).

Mn(2+) contacts are provided by aspartate 248, aspartate 259, histidine 339, glutamate 384, and glutamate 423.

The protein belongs to the peptidase M24B family. Bacterial-type prolidase subfamily. Requires Mn(2+) as cofactor.

It carries out the reaction Xaa-L-Pro dipeptide + H2O = an L-alpha-amino acid + L-proline. In terms of biological role, splits dipeptides with a prolyl residue in the C-terminal position. This chain is Xaa-Pro dipeptidase, found in Colwellia psychrerythraea (strain 34H / ATCC BAA-681) (Vibrio psychroerythus).